The following is a 378-amino-acid chain: Phosphatidyl-myo-inositol mannosyltransferase (378 aa).

GDP-alpha-D-mannose-binding residues include Tyr-9 and Gly-16. A 1,2-diacyl-sn-glycero-3-phospho-(1D-myo-inositol) contacts are provided by residues Gln-18, 62–63 (YN), and Arg-68. GDP-alpha-D-mannose contacts are provided by residues Arg-196, 201–202 (RK), 251–253 (VDD), Lys-256, 274–278 (ESFGI), and Glu-282.

Belongs to the glycosyltransferase group 1 family. Monomer. Mg(2+) serves as cofactor.

Its subcellular location is the cell membrane. The catalysed reaction is a 1,2-diacyl-sn-glycero-3-phospho-(1D-myo-inositol) + GDP-alpha-D-mannose = a 1,2-diacyl-sn-glycero-3-phospho-[alpha-D-mannopyranosyl-(1&lt;-&gt;6)-D-myo-inositol] + GDP + H(+). It participates in phospholipid metabolism; phosphatidylinositol metabolism. Functionally, involved in the biosynthesis of phosphatidyl-myo-inositol mannosides (PIM) which are early precursors in the biosynthesis of lipomannans (LM) and lipoarabinomannans (LAM). Catalyzes the addition of a mannosyl residue from GDP-D-mannose (GDP-Man) to the position 2 of the carrier lipid phosphatidyl-myo-inositol (PI) to generate a phosphatidyl-myo-inositol bearing an alpha-1,2-linked mannose residue (PIM1). This Mycobacterium bovis (strain ATCC BAA-935 / AF2122/97) protein is Phosphatidyl-myo-inositol mannosyltransferase.